A 657-amino-acid chain; its full sequence is Iron-sulfur cluster biogenesis chaperone, mitochondrial (657 aa).

It belongs to the heat shock protein 70 family. As to quaternary structure, interacts with the Fe/S cluster assembly proteins ISU1, MGE1, GRX5 and JAC1.

The protein resides in the mitochondrion matrix. The enzyme catalyses ATP + H2O = ADP + phosphate + H(+). Its function is as follows. Required for the assembly of iron-sulfur (Fe/S) clusters in mitochondria. Assisted by the DnaJ-like co-chaperone JAC1 and the nucleotide exchange factor MGE1, it mediates ATP-dependent Fe-S cluster transfer from the scaffold proteins ISU1/ISU2 to GRX5. The protein is Iron-sulfur cluster biogenesis chaperone, mitochondrial of Saccharomyces cerevisiae (strain ATCC 204508 / S288c) (Baker's yeast).